Here is a 144-residue protein sequence, read N- to C-terminus: Nucleoside diphosphate kinase (144 aa).

Lys9, Phe57, Arg85, Thr91, Arg102, and Asn112 together coordinate ATP. The active-site Pros-phosphohistidine intermediate is the His120.

This sequence belongs to the NDK family. In terms of assembly, homotetramer. Mg(2+) serves as cofactor.

The protein resides in the cytoplasm. The enzyme catalyses a 2'-deoxyribonucleoside 5'-diphosphate + ATP = a 2'-deoxyribonucleoside 5'-triphosphate + ADP. The catalysed reaction is a ribonucleoside 5'-diphosphate + ATP = a ribonucleoside 5'-triphosphate + ADP. Functionally, major role in the synthesis of nucleoside triphosphates other than ATP. The ATP gamma phosphate is transferred to the NDP beta phosphate via a ping-pong mechanism, using a phosphorylated active-site intermediate. The protein is Nucleoside diphosphate kinase of Streptococcus uberis (strain ATCC BAA-854 / 0140J).